Reading from the N-terminus, the 513-residue chain is Catalase (513 aa).

The first 30 residues, 1–30 (MNPSLNAFRPGRLLVAASLTASLLSLSVQA), serve as a signal peptide directing secretion. Active-site residues include histidine 81 and asparagine 153. Tyrosine 361 is a binding site for heme. The span at 391-407 (DGALNAGHSTSGVNYQP) shows a compositional bias: polar residues. Residues 391-413 (DGALNAGHSTSGVNYQPSRLDPR) form a disordered region.

Belongs to the catalase family. Heme serves as cofactor.

The protein resides in the periplasm. It carries out the reaction 2 H2O2 = O2 + 2 H2O. Functionally, decomposes hydrogen peroxide into water and oxygen; serves to protect cells from the toxic effects of hydrogen peroxide. The polypeptide is Catalase (katB) (Pseudomonas aeruginosa (strain ATCC 15692 / DSM 22644 / CIP 104116 / JCM 14847 / LMG 12228 / 1C / PRS 101 / PAO1)).